The chain runs to 719 residues: Calpain-12 (719 aa).

The Calpain catalytic domain occupies 45–341 (LFRDPYFPAG…FDTVQICSLS (297 aa)). Catalysis depends on residues cysteine 105, histidine 259, and asparagine 283. Residues 342–540 (PEVLGPSPEG…DDVISADLQS (199 aa)) form a domain III region. Residues 393-402 (DEEDDEDEEG) are compositionally biased toward acidic residues. The disordered stretch occupies residues 393–418 (DEEDDEDEEGPWGGWGAAGARGPARG). The interval 541 to 719 (LQGPYLPLEL…RQWMEVATFS (179 aa)) is domain IV. An EF-hand domain is found at 620-655 (GYLLEWQAIFNKFDEDTSGTMNSYELRLALNAAGFH). Residues aspartate 633, aspartate 635, serine 637, threonine 639, and glutamate 644 each coordinate Ca(2+).

This sequence belongs to the peptidase C2 family.

Functionally, calcium-regulated non-lysosomal thiol-protease. This chain is Calpain-12 (CAPN12), found in Homo sapiens (Human).